The following is a 151-amino-acid chain: GTP-dependent dephospho-CoA kinase (151 aa).

5 residues coordinate GTP: aspartate 30, valine 31, aspartate 49, lysine 51, and glutamate 104.

This sequence belongs to the GTP-dependent DPCK family.

It carries out the reaction 3'-dephospho-CoA + GTP = GDP + CoA + H(+). It functions in the pathway cofactor biosynthesis; coenzyme A biosynthesis. Its function is as follows. Catalyzes the GTP-dependent phosphorylation of the 3'-hydroxyl group of dephosphocoenzyme A to form coenzyme A (CoA). This is GTP-dependent dephospho-CoA kinase from Cenarchaeum symbiosum (strain A).